The sequence spans 577 residues: Probable ATP-dependent RNA helicase DDX55 homolog (577 aa).

The short motif at 7–37 is the Q motif element; that stretch reads AVATKTYREKLGPEILEVFDKSYKSFTDVQV. Positions 40–218 constitute a Helicase ATP-binding domain; it reads GTHLLNLSDV…VFGLRNAKQV (179 aa). 53–60 provides a ligand contact to ATP; the sequence is SPTGSGKT. A DEAD box motif is present at residues 166–169; the sequence is DEAD. Positions 231–393 constitute a Helicase C-terminal domain; sequence TLKNYFVECP…EVKVPTSTSR (163 aa). The tract at residues 508-577 is disordered; the sequence is AKEKKRREKE…LSKKEIKDVL (70 aa). Basic residues predominate over residues 510–530; sequence EKKRREKEARKMKRAGGRFKS.

Belongs to the DEAD box helicase family. DDX55/SPB4 subfamily.

It catalyses the reaction ATP + H2O = ADP + phosphate + H(+). Functionally, probable ATP-binding RNA helicase. This chain is Probable ATP-dependent RNA helicase DDX55 homolog, found in Caenorhabditis briggsae.